Reading from the N-terminus, the 622-residue chain is Mitochondrial distribution and morphology protein 34 (622 aa).

In terms of domain architecture, SMP-LTD spans 1 to 204; it reads MSFKVNWNSL…LPTLIHQLSL (204 aa). Disordered regions lie at residues 362 to 399 and 568 to 592; these read YSNK…PSEL and FDGG…TRNE. A compositionally biased stretch (basic residues) spans 370–384; sequence KPKRRRIKVHKKNKS. A compositionally biased stretch (polar residues) spans 390–399; the sequence is TTTTSKPSEL. The span at 571–583 shows a compositional bias: low complexity; the sequence is GKNNNTNDNNSKN.

This sequence belongs to the MDM34 family. As to quaternary structure, component of the ER-mitochondria encounter structure (ERMES) or MDM complex, composed of MMM1, MDM10, MDM12 and MDM34.

It localises to the mitochondrion outer membrane. In terms of biological role, component of the ERMES/MDM complex, which serves as a molecular tether to connect the endoplasmic reticulum (ER) and mitochondria. Components of this complex are involved in the control of mitochondrial shape and protein biogenesis, and function in nonvesicular lipid trafficking between the ER and mitochondria. MDM34 is required for the interaction of the ER-resident membrane protein MMM1 and the outer mitochondrial membrane-resident beta-barrel protein MDM10. This Candida dubliniensis (strain CD36 / ATCC MYA-646 / CBS 7987 / NCPF 3949 / NRRL Y-17841) (Yeast) protein is Mitochondrial distribution and morphology protein 34.